The primary structure comprises 315 residues: Glycine--tRNA ligase alpha subunit (315 aa).

The protein belongs to the class-II aminoacyl-tRNA synthetase family. In terms of assembly, tetramer of two alpha and two beta subunits.

Its subcellular location is the cytoplasm. It catalyses the reaction tRNA(Gly) + glycine + ATP = glycyl-tRNA(Gly) + AMP + diphosphate. This chain is Glycine--tRNA ligase alpha subunit, found in Pseudomonas aeruginosa (strain LESB58).